We begin with the raw amino-acid sequence, 525 residues long: Potassium voltage-gated channel subfamily A member 3 (525 aa).

Residues 1–23 (MTVVPGDHLLEPEAAGGGGGDPP) form a disordered region. At 1–184 (MTVVPGDHLL…EYPESSGPAR (184 aa)) the chain is on the cytoplasmic side. Residues 185 to 203 (GIAIVSVLVILISIVIFCL) form a helical membrane-spanning segment. Over 204–244 (ETLPEFRDEKDYPASPSQDVFEAANNSTSGASSGASSFSDP) the chain is Extracellular. An N-linked (GlcNAc...) asparagine glycan is attached at N229. The helical transmembrane segment at 245–266 (FFVVETLCIIWFSFELLVRFFA) threads the bilayer. Residue C267 is the site of S-palmitoyl cysteine attachment. Residues 267-277 (CPSKATFSRNI) are Cytoplasmic-facing. The chain crosses the membrane as a helical span at residues 278-298 (MNLIDIVAIIPYFITLGTELA). At 299–312 (ERQGNGQQAMSLAI) the chain is on the extracellular side. A helical; Voltage-sensor transmembrane segment spans residues 313–331 (LRVIRLVRVFRIFKLSRHS). The Cytoplasmic segment spans residues 332–347 (KGLQILGQTLKASMRE). A helical membrane pass occupies residues 348–367 (LGLLIFFLFIGVILFSSAVY). Residues 368–408 (FAEADDPSSGFNSIPDAFWWAVVTMTTVGYGDMHPVTIGGK) lie on the Extracellular side of the membrane. Residues 394–399 (TVGYGD) carry the Selectivity filter motif. The chain crosses the membrane as a helical span at residues 409-431 (IVGSLCAIAGVLTIALPVPVIVS). At 432-525 (NFNYFYHRET…VNIKKIFTDV (94 aa)) the chain is on the cytoplasmic side. The segment at 432 to 525 (NFNYFYHRET…VNIKKIFTDV (94 aa)) is interaction with KCNE4. Y449 bears the Phosphotyrosine mark. S470 is subject to Phosphoserine; by PKA. The short motif at 523–525 (TDV) is the PDZ-binding element.

Belongs to the potassium channel family. A (Shaker) (TC 1.A.1.2) subfamily. Kv1.3/KCNA3 sub-subfamily. As to quaternary structure, homotetramer. Forms heterooligomers with KCNE4 which inhibits KCNA3 activity by impairing localization to the cell membrane. The stoichiometry of KCNA3 and KCNE4 in the heterooligomers are 4:1, 4:2, 4:3 or 4:4 respectively. Increasing the number of KCNE4 subunits steadily slows the activation KCNA3 and decreases its abundance at the cell membrane. However, a single subunit of KCNE4 is sufficient for the cooperative enhancement of the inactivating function of the channel. Interacts with SEC24D; this interaction is reduced in the presence of KCNE4. Interacts with DLG1, DLG2 and DLG4 via their PDZ domains. In terms of processing, phosphorylation on Tyr-449 inhibits its channel activity. Post-translationally, N-glycosylation promotes the cell surface expression.

It localises to the cell membrane. The catalysed reaction is K(+)(in) = K(+)(out). Its activity is regulated as follows. Activity is up-regulated by JAK2. In terms of biological role, mediates the voltage-dependent potassium ion permeability of excitable membranes. Assuming opened or closed conformations in response to the voltage difference across the membrane, the protein forms a potassium-selective channel through which potassium ions may pass in accordance with their electrochemical gradient. The sequence is that of Potassium voltage-gated channel subfamily A member 3 (Kcna3) from Rattus norvegicus (Rat).